Reading from the N-terminus, the 99-residue chain is Malonate decarboxylase acyl carrier protein (99 aa).

Ser25 carries the post-translational modification O-(phosphoribosyl dephospho-coenzyme A)serine.

This sequence belongs to the MdcC family. In terms of processing, covalently binds the prosthetic group of malonate decarboxylase.

It localises to the cytoplasm. Subunit of malonate decarboxylase, it is an acyl carrier protein to which acetyl and malonyl thioester residues are bound via a 2'-(5''-phosphoribosyl)-3'-dephospho-CoA prosthetic group and turn over during the catalytic mechanism. The sequence is that of Malonate decarboxylase acyl carrier protein from Pseudomonas putida (Arthrobacter siderocapsulatus).